We begin with the raw amino-acid sequence, 578 residues long: Acyl-CoA ligase AKT1 (578 aa).

Residues 210–218 (SSGTSGAQK), 350–355 (QCYGAT), Asp-438, Arg-457, and Lys-554 each bind ATP. Residues 281–350 (DVEDLLSIVE…RHHPTWKTKQ (70 aa)) are SBD1. The tract at residues 351 to 413 (CYGATEAGTA…VSSPSLAIGY (63 aa)) is SBD2. Positions 576 to 578 (SKI) match the Peroxisomal targeting signal type 1 motif.

The protein resides in the peroxisome. It functions in the pathway mycotoxin biosynthesis. Acyl-CoA ligase; part of the gene clusters that mediate the biosynthesis of the host-selective toxins (HSTs) AK-toxins responsible for Japanese pear black spot disease by the Japanese pear pathotype. AK-toxins are esters of 9,10-epoxy 8-hydroxy 9-methyldecatrienoic acid (EDA). On cellular level, AK-toxins affect plasma membrane of susceptible cells and cause a sudden increase in loss of K(+) after a few minutes of toxin treatment. The acyl-CoA ligase AKT1, the hydrolase AKT2 and enoyl-CoA hydratase AKT3 are all involved in the biosynthesis of the AK-, AF- and ACT-toxin common 9,10-epoxy-8-hydroxy-9-methyl-decatrienoic acid (EDA) structural moiety. Part of the EDA biosynthesis occurs in the peroxisome since these 3 enzymes are localized in peroxisomes. The exact roles of the 3 enzymes, as well as of additional AK-toxin clusters enzymes, including AKT4, AKT6 and AKTS1, have still to be elucidated. The Cytochrome P450 monooxygenase AKT7 on the other side functions to limit production of EDA and AK-toxin, probably via the catalysis of a side reaction of EDA or its precursor. This is Acyl-CoA ligase AKT1 from Alternaria alternata (Alternaria rot fungus).